The primary structure comprises 113 residues: uncharacterized protein (113 aa).

This is an uncharacterized protein from Methanocaldococcus jannaschii (strain ATCC 43067 / DSM 2661 / JAL-1 / JCM 10045 / NBRC 100440) (Methanococcus jannaschii).